The following is a 400-amino-acid chain: Cysteine desulfurase 1 (400 aa).

Pyridoxal 5'-phosphate-binding positions include 71 to 72 (GT), asparagine 150, glutamine 178, and 198 to 200 (SGH). Lysine 201 carries the N6-(pyridoxal phosphate)lysine modification. Threonine 236 lines the pyridoxal 5'-phosphate pocket. Residue cysteine 324 is the Cysteine persulfide intermediate of the active site. Cysteine 324 serves as a coordination point for [2Fe-2S] cluster.

Belongs to the class-V pyridoxal-phosphate-dependent aminotransferase family. NifS/IscS subfamily. As to quaternary structure, homodimer. Pyridoxal 5'-phosphate is required as a cofactor.

The catalysed reaction is (sulfur carrier)-H + L-cysteine = (sulfur carrier)-SH + L-alanine. In terms of biological role, catalyzes the removal of elemental sulfur atoms from cysteine to produce alanine. Seems to participate in the biosynthesis of the nitrogenase metalloclusters by providing the inorganic sulfur required for the Fe-S core formation. The polypeptide is Cysteine desulfurase 1 (Trichormus variabilis (strain ATCC 29413 / PCC 7937) (Anabaena variabilis)).